A 505-amino-acid polypeptide reads, in one-letter code: Cobyric acid synthase (505 aa).

Residues 260–453 (RIAVAAIYFP…FHGIIDEPEV (194 aa)) form the GATase cobBQ-type domain. C341 functions as the Nucleophile in the catalytic mechanism. H445 is a catalytic residue.

This sequence belongs to the CobB/CobQ family. CobQ subfamily.

It functions in the pathway cofactor biosynthesis; adenosylcobalamin biosynthesis. Its function is as follows. Catalyzes amidations at positions B, D, E, and G on adenosylcobyrinic A,C-diamide. NH(2) groups are provided by glutamine, and one molecule of ATP is hydrogenolyzed for each amidation. The polypeptide is Cobyric acid synthase (Chlorobium phaeobacteroides (strain DSM 266 / SMG 266 / 2430)).